A 201-amino-acid chain; its full sequence is MTELTTPIYPLQRNWSWWFLNDDRNASWQDRLKKVYTFNTVPEFWAFYEAILPPSGLNDLCDYNVFRDDIQPKWEAPENWDGGRWLIIINKGKTPEVLDAVWLEILLALIGEQFGKDMESICGLVCNVRGQGSKISVWTKNCNDDDTNMRIGVVLKEKLMAAASKAHSKPLFDVIHYQTHRNCVKKTTSALKYKFSLKSIV.

An intrachain disulfide couples cysteine 122 to cysteine 126.

This sequence belongs to the eukaryotic initiation factor 4E family. In terms of assembly, eIF4F is a multi-subunit complex, the composition of which varies with external and internal environmental conditions. It is composed of at least eIF4A, eIF4E and eIF4G. eIF4E is also known to interact with other partners. As to expression, enriched in the germline.

Recognizes and binds the 7-methylguanosine-containing mRNA cap during an early step in the initiation of protein synthesis and facilitates ribosome binding by inducing the unwinding of the mRNAs secondary structures. All 5 eIF4E proteins bind monomethyl cap structures. Only ife-1, ife-2 and ife-5 bind trimethyl cap structures which result from trans-splicing. Translation of trimethyl cap structure mRNAs may be regulated by intracellular redox state; disulfide bonds change the width and depth of the cap-binding cavity determining selectivity to mRNA caps. The protein is Eukaryotic translation initiation factor 4E-5 (ife-5) of Caenorhabditis elegans.